The sequence spans 537 residues: Chaperonin GroEL (537 aa).

Residues 29–32 (TLGP), 86–90 (DGTTT), Gly-413, 477–479 (NAA), and Asp-493 each bind ATP.

It belongs to the chaperonin (HSP60) family. Forms a cylinder of 14 subunits composed of two heptameric rings stacked back-to-back. Interacts with the co-chaperonin GroES.

It is found in the cytoplasm. It catalyses the reaction ATP + H2O + a folded polypeptide = ADP + phosphate + an unfolded polypeptide.. Its function is as follows. Together with its co-chaperonin GroES, plays an essential role in assisting protein folding. The GroEL-GroES system forms a nano-cage that allows encapsulation of the non-native substrate proteins and provides a physical environment optimized to promote and accelerate protein folding. The chain is Chaperonin GroEL from Parascardovia denticolens (Bifidobacterium denticolens).